The sequence spans 397 residues: Beta sliding clamp (397 aa).

Belongs to the beta sliding clamp family. Forms a ring-shaped head-to-tail homodimer around DNA which binds and tethers DNA polymerases and other proteins to the DNA. The DNA replisome complex has a single clamp-loading complex (3 tau and 1 each of delta, delta', psi and chi subunits) which binds 3 Pol III cores (1 core on the leading strand and 2 on the lagging strand) each with a beta sliding clamp dimer. Additional proteins in the replisome are other copies of gamma, psi and chi, Ssb, DNA helicase and RNA primase.

The protein resides in the cytoplasm. Confers DNA tethering and processivity to DNA polymerases and other proteins. Acts as a clamp, forming a ring around DNA (a reaction catalyzed by the clamp-loading complex) which diffuses in an ATP-independent manner freely and bidirectionally along dsDNA. Initially characterized for its ability to contact the catalytic subunit of DNA polymerase III (Pol III), a complex, multichain enzyme responsible for most of the replicative synthesis in bacteria; Pol III exhibits 3'-5' exonuclease proofreading activity. The beta chain is required for initiation of replication as well as for processivity of DNA replication. The protein is Beta sliding clamp (dnaN) of Mycolicibacterium smegmatis (strain ATCC 700084 / mc(2)155) (Mycobacterium smegmatis).